Consider the following 471-residue polypeptide: Maintenance of mitochondrial morphology protein 1 (471 aa).

The Lumenal portion of the chain corresponds to 1–21 (MSSPQNTSCPPSQHSLSFTQG). Residues 22-42 (LLLGQLSVVLLIGAFIKFFIF) traverse the membrane as a helical segment. At 43-471 (GESPSSSSRG…GSLPGAPAVA (429 aa)) the chain is on the cytoplasmic side. The SMP-LTD domain occupies 128 to 370 (QPESLDWFNV…EPRVQLVALP (243 aa)). Disordered regions lie at residues 271 to 306 (GTTE…GVRS), 395 to 415 (EDPA…NRDG), and 448 to 471 (RGDT…PAVA). Residues 280–295 (PHPENQNESKPSRQDP) show a composition bias toward basic and acidic residues. Over residues 401-410 (ATHSGFTPVN) the composition is skewed to polar residues.

It belongs to the MMM1 family. Homodimer. Component of the ER-mitochondria encounter structure (ERMES) or MDM complex, composed of MMM1, MDM10, MDM12 and MDM34. An MMM1 homodimer associates with one molecule of MDM12 on each side in a pairwise head-to-tail manner, and the SMP-LTD domains of MMM1 and MDM12 generate a continuous hydrophobic tunnel for phospholipid trafficking.

It localises to the endoplasmic reticulum membrane. Component of the ERMES/MDM complex, which serves as a molecular tether to connect the endoplasmic reticulum (ER) and mitochondria. Components of this complex are involved in the control of mitochondrial shape and protein biogenesis, and function in nonvesicular lipid trafficking between the ER and mitochondria. The MDM12-MMM1 subcomplex functions in the major beta-barrel assembly pathway that is responsible for biogenesis of all outer membrane beta-barrel proteins, and acts in a late step after the SAM complex. The MDM10-MDM12-MMM1 subcomplex further acts in the TOM40-specific pathway after the action of the MDM12-MMM1 complex. Essential for establishing and maintaining the structure of mitochondria and maintenance of mtDNA nucleoids. The polypeptide is Maintenance of mitochondrial morphology protein 1 (Arthroderma otae (strain ATCC MYA-4605 / CBS 113480) (Microsporum canis)).